A 955-amino-acid polypeptide reads, in one-letter code: Mediator of RNA polymerase II transcription subunit 16 (955 aa).

The interval 855–874 is disordered; sequence ALPETNANANANQNGKSSTQ. Polar residues predominate over residues 857-873; it reads PETNANANANQNGKSST.

This sequence belongs to the Mediator complex subunit 16 family. As to quaternary structure, component of the Mediator complex.

The protein localises to the nucleus. Functionally, component of the Mediator complex, a coactivator involved in the regulated transcription of nearly all RNA polymerase II-dependent genes. Mediator functions as a bridge to convey information from gene-specific regulatory proteins to the basal RNA polymerase II transcription machinery. Mediator is recruited to promoters by direct interactions with regulatory proteins and serves as a scaffold for the assembly of a functional preinitiation complex with RNA polymerase II and the general transcription factors. This is Mediator of RNA polymerase II transcription subunit 16 (sin4) from Aspergillus fumigatus (strain ATCC MYA-4609 / CBS 101355 / FGSC A1100 / Af293) (Neosartorya fumigata).